We begin with the raw amino-acid sequence, 444 residues long: Cell wall mannoprotein PST1 (444 aa).

The signal sequence occupies residues 1–19; the sequence is MQLHSLIASTALLITSALA. N-linked (GlcNAc...) asparagine glycosylation is found at N57, N76, N83, N86, N196, N210, N228, N235, N242, N263, N268, N280, N292, N305, and N329. Composition is skewed to low complexity over residues 359-381 and 395-418; these read SVKLSSTSKSQSSQTTAKVSKSS and KAAASASSVSSSGASSSSSKSSKG. A disordered region spans residues 359–418; it reads SVKLSSTSKSQSSQTTAKVSKSSSKAEEKKFTSGDIKAAASASSVSSSGASSSSSKSSKG. Residue N419 is the site of GPI-anchor amidated asparagine attachment. The propeptide at 420–444 is removed in mature form; the sequence is AAIMAPIGQTTPLVGLLTAIIMSIM.

Belongs to the SPS2 family. Post-translationally, extensively N- and O-mannosylated.

The protein resides in the cell membrane. It localises to the secreted. Its subcellular location is the cell wall. Has a partially redundant function to ECM33 in cell wall integrity. May be involved in a repair mechanism activated in response to cell wall damage. In Saccharomyces cerevisiae (strain ATCC 204508 / S288c) (Baker's yeast), this protein is Cell wall mannoprotein PST1 (PST1).